The primary structure comprises 483 residues: Sphingomyelin synthase-related 1 (483 aa).

3 helical membrane-spanning segments follow: residues 182–202, 230–250, and 261–281; these read LIAF…MVLV, FDMC…VLFF, and MFSL…ITSL. Histidine 330 is a catalytic residue. The helical transmembrane segment at 349 to 369 threads the bilayer; that stretch reads WTGLHTFTWVLNCFAIFLILA. Catalysis depends on residues histidine 373 and aspartate 377. The helical transmembrane segment at 376–396 threads the bilayer; that stretch reads IDVFIAFYISSRMFLYYHAYA. Over 397 to 483 the chain is Cytoplasmic; it reads YNHAGITATD…NSKNHTKKHN (87 aa). Residues 450-461 are compositionally biased toward basic and acidic residues; sequence EPKITPKSDSSR. The disordered stretch occupies residues 450 to 483; that stretch reads EPKITPKSDSSRKRSSVVAAKQNGNSKNHTKKHN.

This sequence belongs to the sphingomyelin synthase family.

It is found in the membrane. The chain is Sphingomyelin synthase-related 1 from Caenorhabditis elegans.